The following is a 45-amino-acid chain: Large ribosomal subunit protein bL34 (45 aa).

Positions 1–10 are enriched in basic and acidic residues; it reads MTKRTLEGTN. The segment at 1-27 is disordered; sequence MTKRTLEGTNRKRKRTSGFRARMRSAT. Residues 11-23 are compositionally biased toward basic residues; it reads RKRKRTSGFRARM.

Belongs to the bacterial ribosomal protein bL34 family.

This is Large ribosomal subunit protein bL34 from Synechococcus elongatus (strain ATCC 33912 / PCC 7942 / FACHB-805) (Anacystis nidulans R2).